The sequence spans 496 residues: E3 ubiquitin-protein ligase CBL-C (496 aa).

The 4H stretch occupies residues 7 to 144 (PRGWQRGEPR…SALFPAGKYC (138 aa)). The Cbl-PTB domain maps to 7 to 320 (PRGWQRGEPR…GKKHNPDLTE (314 aa)). The segment at 145–217 (GHLYQLTKGS…FEFDVFTRLF (73 aa)) is EF-hand-like. Positions 198, 200, 202, and 209 each coordinate Ca(2+). The SH2-like stretch occupies residues 218–320 (QPWPTLLRNW…GKKHNPDLTE (103 aa)). Position 263 (Arg-263) interacts with 4-O-phospho-L-tyrosine. The tract at residues 321–349 (LCRVEPYQRIQVSEEQLLLYQAMNSTFQL) is linker. The residue at position 340 (Tyr-340) is a Phosphotyrosine; by SRC. The RING-type zinc-finger motif lies at 350 to 389 (CKICAERDKDVRIEPCGHLLCSCCLAAWQDSDSQTCPFCR). An interaction with RET region spans residues 350–494 (CKICAERDKD…RPRAREEATE (145 aa)). Residues 432–453 (PVIPSAPSLLPEDQFPQGPQDK) are disordered.

In terms of assembly, interacts with Ubiquitin-conjugating enzyme E2 UBE2D2 and UBE2D3. Isoform 1 interacts with EGFR (tyrosine phosphorylated). Interacts with the SH3 domain proteins LYN and CRK. Interacts (via RING-type zinc finger) with TGFB1I1 (via LIM zinc-binding domain 2); the interaction is direct and enhances the E3 activity. Interacts directly with RET (inactive) and CD2AP; dissociates from RET upon RET activation by GDNF which also increases the interaction with CD2AP suggesting dissociation as CBLC:CD2AP complex. Interacts with SRC; the interaction is enhanced when SRC is phosphorylated at 'Tyr-419'. Post-translationally, phosphorylated on tyrosines by EGFR. In terms of processing, phosphorylated on multiple tyrosine residues by SRC. Isoform 1, but not isoform 2, is phosphorylated on tyrosines by EGFR. Autoubiquitinated, when phosphorylated at Tyr-340. As to expression, widely expressed in tissues, where the expression is restricted to epithelial cells (at protein level).

It carries out the reaction S-ubiquitinyl-[E2 ubiquitin-conjugating enzyme]-L-cysteine + [acceptor protein]-L-lysine = [E2 ubiquitin-conjugating enzyme]-L-cysteine + N(6)-ubiquitinyl-[acceptor protein]-L-lysine.. Its activity is regulated as follows. Phosphorylation at Tyr-340 is necessary and sufficient for the activation of E3 activity. Acts as an E3 ubiquitin-protein ligase, which accepts ubiquitin from specific E2 ubiquitin-conjugating enzymes, and then transfers it to substrates promoting their degradation by the proteasome. Functionally coupled with the E2 ubiquitin-protein ligases UB2D1, UB2D2 and UB2D3. Regulator of EGFR mediated signal transduction; upon EGF activation, ubiquitinates EGFR. Isoform 1, but not isoform 2, inhibits EGF stimulated MAPK1 activation. Promotes ubiquitination of SRC phosphorylated at 'Tyr-424', has the highest ubiquitin ligase activity among CBL family proteins. In collaboration with CD2AP may act as regulatory checkpoint for Ret signaling by modulating the rate of RET degradation after ligand activation; CD2AP converts it from an inhibitor to a promoter of RET degradation; the function limits the potency of GDNF on neuronal survival. The chain is E3 ubiquitin-protein ligase CBL-C (Cblc) from Mus musculus (Mouse).